The sequence spans 450 residues: Probable glucoamylase (450 aa).

Residues Met1–Ala16 form the signal peptide. The propeptide occupies Glu17 to Glu28. Trp147 serves as a coordination point for substrate. The active-site Proton acceptor is the Asp203. Glu206 (proton donor) is an active-site residue. Residues Asn383 and Asn409 are each glycosylated (N-linked (GlcNAc...) asparagine).

Belongs to the glycosyl hydrolase 15 family.

It catalyses the reaction Hydrolysis of terminal (1-&gt;4)-linked alpha-D-glucose residues successively from non-reducing ends of the chains with release of beta-D-glucose.. This is Probable glucoamylase (meu17) from Schizosaccharomyces pombe (strain 972 / ATCC 24843) (Fission yeast).